Consider the following 101-residue polypeptide: Urease subunit beta (101 aa).

This sequence belongs to the urease beta subunit family. Heterotrimer of UreA (gamma), UreB (beta) and UreC (alpha) subunits. Three heterotrimers associate to form the active enzyme.

It localises to the cytoplasm. The enzyme catalyses urea + 2 H2O + H(+) = hydrogencarbonate + 2 NH4(+). Its pathway is nitrogen metabolism; urea degradation; CO(2) and NH(3) from urea (urease route): step 1/1. The protein is Urease subunit beta of Azoarcus sp. (strain BH72).